Consider the following 640-residue polypeptide: Chaperone protein dnaK2 (640 aa).

At Thr-197 the chain carries Phosphothreonine; by autocatalysis. A disordered region spans residues 605–640; it reads VYQSAQSSDGTGSSSSGGSGSGGDDEVIDAEFSETK. Positions 627–640 are enriched in acidic residues; it reads GDDEVIDAEFSETK.

This sequence belongs to the heat shock protein 70 family.

Functionally, acts as a chaperone. This is Chaperone protein dnaK2 (dnaK2) from Thermosynechococcus vestitus (strain NIES-2133 / IAM M-273 / BP-1).